Reading from the N-terminus, the 339-residue chain is Quinolinate synthase (339 aa).

2 residues coordinate iminosuccinate: H63 and S81. C126 contributes to the [4Fe-4S] cluster binding site. Residues 152–154 (YVN) and S169 contribute to the iminosuccinate site. C211 serves as a coordination point for [4Fe-4S] cluster. Iminosuccinate contacts are provided by residues 237-239 (HPE) and T254. Position 297 (C297) interacts with [4Fe-4S] cluster.

Belongs to the quinolinate synthase family. Type 2 subfamily. [4Fe-4S] cluster serves as cofactor.

The protein localises to the cytoplasm. It catalyses the reaction iminosuccinate + dihydroxyacetone phosphate = quinolinate + phosphate + 2 H2O + H(+). Its pathway is cofactor biosynthesis; NAD(+) biosynthesis; quinolinate from iminoaspartate: step 1/1. In terms of biological role, catalyzes the condensation of iminoaspartate with dihydroxyacetone phosphate to form quinolinate. In Xylella fastidiosa (strain 9a5c), this protein is Quinolinate synthase.